The following is a 435-amino-acid chain: Mitochondrial association factor 1 form a1 (435 aa).

The signal sequence occupies residues 1 to 20 (MWRIWRCRLSFLFATGCLLG). The Vacuolar segment spans residues 21–96 (ALTAGLGSQM…VTARRRRNRR (76 aa)). A helical membrane pass occupies residues 97–117 (IALIATAVGVAVILAALYVLR). Residues 118 to 435 (RRRAQPPQEP…ERTYTFPQGD (318 aa)) are Cytoplasmic-facing. Residues 120–159 (RAQPPQEPEPPTRLRTPRPRAPSGQQQPSESEPPAGVPMT) are disordered.

In terms of assembly, interacts with host SAMM50.

Its subcellular location is the parasitophorous vacuole membrane. Its function is as follows. During host cell infection by tachyzoites, does not play a role in tethering the parasitophorous vacuole to the host mitochondria, probably because it does not bind host mitochondrial import protein TOMM70. This Toxoplasma gondii (strain ATCC 50611 / Me49) protein is Mitochondrial association factor 1 form a1.